Here is a 313-residue protein sequence, read N- to C-terminus: 2-dehydro-3-deoxygluconokinase/2-dehydro-3-deoxygalactonokinase (313 aa).

Substrate contacts are provided by residues 34–38, Tyr-90, 106–108, and Arg-166; these read GSELN and YYR. Residues 164–166, 226–231, and 255–258 each bind ATP; these read NIR, KLGSKG, and GAGD. Substrate contacts are provided by Asp-258 and Asp-294. The active-site Proton acceptor is Asp-258.

In terms of assembly, homohexamer; trimer of dimers.

The catalysed reaction is 2-dehydro-3-deoxy-D-gluconate + ATP = 2-dehydro-3-deoxy-6-phospho-D-gluconate + ADP + H(+). It catalyses the reaction 2-dehydro-3-deoxy-D-galactonate + ATP = 2-dehydro-3-deoxy-6-phospho-D-galactonate + ADP + H(+). It participates in carbohydrate acid metabolism; 2-dehydro-3-deoxy-D-gluconate degradation; D-glyceraldehyde 3-phosphate and pyruvate from 2-dehydro-3-deoxy-D-gluconate: step 1/2. In terms of biological role, involved in the degradation of glucose and galactose via the semi-phosphorylative Entner-Doudoroff pathway. Catalyzes the phosphorylation of 2-keto-3-deoxygluconate (KDG) and 2-keto-3-deoxygalactonate (KDGal) to produce 2-keto-3-deoxy-6-phosphogluconate (KDPG) and 2-keto-3-deoxy-6-phosphogalactonate (KDPGal), respectively. The sequence is that of 2-dehydro-3-deoxygluconokinase/2-dehydro-3-deoxygalactonokinase (kdgK) from Saccharolobus solfataricus (strain ATCC 35092 / DSM 1617 / JCM 11322 / P2) (Sulfolobus solfataricus).